We begin with the raw amino-acid sequence, 407 residues long: MQKKDVKKVVLAYSGGLDTSIILKWLQDEYKCEVVTFTADIGQGEEVEPARKKAISLGIKPENIFIEDLREEFVKDFVFPMFRANAIYEGEYLLGTSIARPLIAKRLVEIAAATKADCVSHGATGKGNDQVRFEIGAYALNPNIKVIAPWREWDLNSREKLLAYAEKNGIDISKKKGKSPYSMDANLLHISYEGLVLEDPNHAPEEDMWRWSVSPKNAPDESDIIEIEYKNGDPVAINAKSMKPHEILTELNRLGAKHGIGRLDIVENRYVGMKSRGCYETPGGTIMLKAHRAIESITMDREAAHLKDELMPKYASLVYNGYWFSPERKMLQAAIDESQKNVNGTVRVELYKGNVMVIGRDSKTDNLFNEAYCTFEEDSVYDQKDANGFIKLNALRFIIAGKNGRKF.

ATP-binding positions include 12–20 and Ala39; that span reads AYSGGLDTS. L-citrulline contacts are provided by Tyr92 and Ser97. Residue Gly122 coordinates ATP. Residues Thr124, Asn128, and Asp129 each coordinate L-aspartate. Residue Asn128 participates in L-citrulline binding. 5 residues coordinate L-citrulline: Arg132, Ser182, Ser191, Glu267, and Tyr279.

The protein belongs to the argininosuccinate synthase family. Type 1 subfamily. Homotetramer.

Its subcellular location is the cytoplasm. The catalysed reaction is L-citrulline + L-aspartate + ATP = 2-(N(omega)-L-arginino)succinate + AMP + diphosphate + H(+). It functions in the pathway amino-acid biosynthesis; L-arginine biosynthesis; L-arginine from L-ornithine and carbamoyl phosphate: step 2/3. This Campylobacter fetus subsp. fetus (strain 82-40) protein is Argininosuccinate synthase.